The primary structure comprises 96 residues: Dynein light chain roadblock-type 1 (96 aa).

N-acetylalanine is present on alanine 2.

Belongs to the GAMAD family. Homodimer. The cytoplasmic dynein 1 complex consists of two catalytic heavy chains (HCs) and a number of non-catalytic subunits presented by intermediate chains (ICs), light intermediate chains (LICs) and light chains (LCs); the composition seems to vary in respect to the IC, LIC and LC composition. The heavy chain homodimer serves as a scaffold for the probable homodimeric assembly of the respective non-catalytic subunits. The ICs and LICs bind directly to the HC dimer and the LCs assemble on the IC dimer. Interacts with DYNLRB2. Interacts with DYNC1I1 and DYNC1I2. Interacts with RAB6A isoform 1 (GTP-bound); the interaction is direct. Interacts with RAB6A isoform 2 (GDP-bound); the interaction is direct. Interacts with RAB6B (GDP-bound).

Its subcellular location is the cytoplasm. The protein localises to the cytoskeleton. Its function is as follows. Acts as one of several non-catalytic accessory components of the cytoplasmic dynein 1 complex that are thought to be involved in linking dynein to cargos and to adapter proteins that regulate dynein function. Cytoplasmic dynein 1 acts as a motor for the intracellular retrograde motility of vesicles and organelles along microtubules. The polypeptide is Dynein light chain roadblock-type 1 (Dynlrb1) (Mus musculus (Mouse)).